A 45-amino-acid polypeptide reads, in one-letter code: MDAIQTRMVISEFEKRIRREAQEKINQFSQQQWILYHLSHPDDEQ.

This is an uncharacterized protein from Dictyostelium discoideum (Social amoeba).